The sequence spans 120 residues: Ribonuclease P protein component (120 aa).

It belongs to the RnpA family. Consists of a catalytic RNA component (M1 or rnpB) and a protein subunit.

It carries out the reaction Endonucleolytic cleavage of RNA, removing 5'-extranucleotides from tRNA precursor.. RNaseP catalyzes the removal of the 5'-leader sequence from pre-tRNA to produce the mature 5'-terminus. It can also cleave other RNA substrates such as 4.5S RNA. The protein component plays an auxiliary but essential role in vivo by binding to the 5'-leader sequence and broadening the substrate specificity of the ribozyme. The chain is Ribonuclease P protein component from Acidothermus cellulolyticus (strain ATCC 43068 / DSM 8971 / 11B).